A 266-amino-acid chain; its full sequence is Ribosomal RNA small subunit methyltransferase A (266 aa).

The S-adenosyl-L-methionine site is built by N12, L14, G39, E61, D87, and N107.

Belongs to the class I-like SAM-binding methyltransferase superfamily. rRNA adenine N(6)-methyltransferase family. RsmA subfamily.

The protein localises to the cytoplasm. The enzyme catalyses adenosine(1518)/adenosine(1519) in 16S rRNA + 4 S-adenosyl-L-methionine = N(6)-dimethyladenosine(1518)/N(6)-dimethyladenosine(1519) in 16S rRNA + 4 S-adenosyl-L-homocysteine + 4 H(+). Specifically dimethylates two adjacent adenosines (A1518 and A1519) in the loop of a conserved hairpin near the 3'-end of 16S rRNA in the 30S particle. May play a critical role in biogenesis of 30S subunits. In Nitratidesulfovibrio vulgaris (strain DP4) (Desulfovibrio vulgaris), this protein is Ribosomal RNA small subunit methyltransferase A.